The sequence spans 366 residues: NADH-quinone oxidoreductase subunit D (366 aa).

It belongs to the complex I 49 kDa subunit family. As to quaternary structure, NDH-1 is composed of 14 different subunits. Subunits NuoB, C, D, E, F, and G constitute the peripheral sector of the complex.

The protein localises to the cell membrane. It carries out the reaction a quinone + NADH + 5 H(+)(in) = a quinol + NAD(+) + 4 H(+)(out). Its function is as follows. NDH-1 shuttles electrons from NADH, via FMN and iron-sulfur (Fe-S) centers, to quinones in the respiratory chain. The immediate electron acceptor for the enzyme in this species is believed to be a menaquinone. Couples the redox reaction to proton translocation (for every two electrons transferred, four hydrogen ions are translocated across the cytoplasmic membrane), and thus conserves the redox energy in a proton gradient. The protein is NADH-quinone oxidoreductase subunit D of Bacillus cereus (strain ZK / E33L).